A 570-amino-acid polypeptide reads, in one-letter code: Sulfite reductase [NADPH] hemoprotein beta-component (570 aa).

Positions 434, 440, 479, and 483 each coordinate [4Fe-4S] cluster. Cys483 provides a ligand contact to siroheme.

Belongs to the nitrite and sulfite reductase 4Fe-4S domain family. Alpha(8)-beta(8). The alpha component is a flavoprotein, the beta component is a hemoprotein. Requires siroheme as cofactor. It depends on [4Fe-4S] cluster as a cofactor.

It carries out the reaction hydrogen sulfide + 3 NADP(+) + 3 H2O = sulfite + 3 NADPH + 4 H(+). It functions in the pathway sulfur metabolism; hydrogen sulfide biosynthesis; hydrogen sulfide from sulfite (NADPH route): step 1/1. Its function is as follows. Component of the sulfite reductase complex that catalyzes the 6-electron reduction of sulfite to sulfide. This is one of several activities required for the biosynthesis of L-cysteine from sulfate. The chain is Sulfite reductase [NADPH] hemoprotein beta-component from Salmonella arizonae (strain ATCC BAA-731 / CDC346-86 / RSK2980).